Here is a 249-residue protein sequence, read N- to C-terminus: Eukaryotic translation initiation factor 3 subunit K (249 aa).

The 177-residue stretch at 46–222 folds into the PCI domain; sequence FDCYANLALL…VKVPTNKENE (177 aa).

This sequence belongs to the eIF-3 subunit K family. In terms of assembly, component of the eukaryotic translation initiation factor 3 (eIF-3) complex.

The protein resides in the cytoplasm. Component of the eukaryotic translation initiation factor 3 (eIF-3) complex, which is involved in protein synthesis of a specialized repertoire of mRNAs and, together with other initiation factors, stimulates binding of mRNA and methionyl-tRNAi to the 40S ribosome. The eIF-3 complex specifically targets and initiates translation of a subset of mRNAs involved in cell proliferation. This chain is Eukaryotic translation initiation factor 3 subunit K, found in Neosartorya fischeri (strain ATCC 1020 / DSM 3700 / CBS 544.65 / FGSC A1164 / JCM 1740 / NRRL 181 / WB 181) (Aspergillus fischerianus).